The sequence spans 466 residues: MASEGDKLWGGRFSGSTDPIMEMLNSSIACDQRLSEVDIQGSMAYAKALEKAGILTKTELEKILSGLEKISEEWSKGVFVVKQSDEDIHTANERRLKELIGDIAGKLHTGRSRNDQVVTDLKLLLKSSISVISTHLLQLIKTLVERAATEIDVIMPGYTHLQKALPIRWSQFLLSHAVALIRDSERLGEVKKRMSVLPLGSGALAGNPLEIDRELLRSELDFASISLNSMDAISERDFVVELLSVATLLMIHLSKLAEDLIIFSTTEFGFVTLSDAYSTGSSLLPQKKNPDSLELIRSKAGRVFGRLAAVLMVLKGLPSTYNKDLQEDKEAVFDVVDTLTAVLQVATGVISTLQVNKENMEKALTPELLSTDLALYLVRKGMPFRQAHVASGKAVHLAETKGIAINKLTLEDLKSISPLFASDVSQVFNIVNSVEQYTAVGGTAKSSVTAQIEQLRELLKKQKEQA.

3 residues coordinate 2-(N(omega)-L-arginino)succinate: Ser-27, Asn-114, and Thr-159. His-160 acts as the Proton acceptor in catalysis. Residue Ser-281 is the Proton donor of the active site. Asn-289, Tyr-321, Gln-326, and Lys-329 together coordinate 2-(N(omega)-L-arginino)succinate.

It belongs to the lyase 1 family. Argininosuccinate lyase subfamily. Homotetramer. Eye lens.

It carries out the reaction 2-(N(omega)-L-arginino)succinate = fumarate + L-arginine. Its pathway is amino-acid biosynthesis; L-arginine biosynthesis; L-arginine from L-ornithine and carbamoyl phosphate: step 3/3. Delta crystallin, the principal crystallin in embryonic lens, is found only in birds and reptiles. This protein may also function as an enzymatically active argininosuccinate lyase. The chain is Argininosuccinate lyase (ASL2) from Gallus gallus (Chicken).